Here is a 445-residue protein sequence, read N- to C-terminus: MGRLFGTDGVRGLANSDLTADLALRLAVAAASVLTAGTSDARPTAVIGRDPRASGEMLQAAVTAGLSSAGVDVLDVGILPTPAVAYLTAKLEASLGVMISASHNPMPDNGIKIFAAGGHKLDDAVEVAIEDALDGTAPPVLPTGAGIGRVRAVDDAAQLYLAHLASAASEPLAGLTVVVDCANGAASALAPVAYAAAGARVIAISADPDGLNINDGCGSTHLENLQKAVVDHGADLGLAHDGDADRCLAVDETGAVVDGDAIMAVLAIAMNEAGELVENTLVATVMSNLGLHIAMREAGINIVTAAVGDRYVLEELRAGGYSLGGEQSGHVVLPAFGTTGDGILTGLRLLGRMARTRKSASVLAATMTTLPQVLINVKVGDKAAVAASPSVLAAVADAERVLGDGGRVLLRPSGTEQLVRVMVEATELPLAQKLADELAEIVGSV.

Ser-102 serves as the catalytic Phosphoserine intermediate. 4 residues coordinate Mg(2+): Ser-102, Asp-241, Asp-243, and Asp-245. Residue Ser-102 is modified to Phosphoserine.

This sequence belongs to the phosphohexose mutase family. Mg(2+) serves as cofactor. In terms of processing, activated by phosphorylation.

It carries out the reaction alpha-D-glucosamine 1-phosphate = D-glucosamine 6-phosphate. Its function is as follows. Catalyzes the conversion of glucosamine-6-phosphate to glucosamine-1-phosphate. The polypeptide is Phosphoglucosamine mutase (Rhodococcus erythropolis (strain PR4 / NBRC 100887)).